A 497-amino-acid chain; its full sequence is Glycerol kinase (497 aa).

Thr-12 contacts ADP. ATP contacts are provided by Thr-12, Thr-13, and Ser-14. Thr-12 contacts sn-glycerol 3-phosphate. Arg-16 serves as a coordination point for ADP. Sn-glycerol 3-phosphate-binding residues include Arg-82, Glu-83, Tyr-134, and Asp-243. Glycerol is bound by residues Arg-82, Glu-83, Tyr-134, Asp-243, and Gln-244. Thr-265 and Gly-308 together coordinate ADP. ATP contacts are provided by Thr-265, Gly-308, Gln-312, and Gly-411. Residue Gly-411 coordinates ADP.

It belongs to the FGGY kinase family.

It carries out the reaction glycerol + ATP = sn-glycerol 3-phosphate + ADP + H(+). The protein operates within polyol metabolism; glycerol degradation via glycerol kinase pathway; sn-glycerol 3-phosphate from glycerol: step 1/1. Inhibited by fructose 1,6-bisphosphate (FBP). Functionally, key enzyme in the regulation of glycerol uptake and metabolism. Catalyzes the phosphorylation of glycerol to yield sn-glycerol 3-phosphate. In Rhizobium meliloti (strain 1021) (Ensifer meliloti), this protein is Glycerol kinase.